A 592-amino-acid polypeptide reads, in one-letter code: Protein alan shepard (592 aa).

The segment at Met1–Pro68 is disordered. The span at Val18–Ala28 shows a compositional bias: gly residues. Over residues Pro36–Gly54 the composition is skewed to polar residues. Over residues Ser55 to Ala64 the composition is skewed to low complexity. A phosphotyrosine mark is found at Tyr124 and Tyr140. The interval Pro162–Glu224 is disordered. The span at Ser176 to Glu224 shows a compositional bias: low complexity. RRM domains lie at Thr229–Leu307 and Thr319–Gly398. Residues Pro565–Lys592 are disordered.

Its function is as follows. Has a role in the perception of gravity. This is Protein alan shepard from Drosophila mojavensis (Fruit fly).